The sequence spans 211 residues: Protein G12 (211 aa).

The N-terminal stretch at 1–19 (MKIAAFVVACLVATSAVSC) is a signal peptide.

In Anopheles gambiae (African malaria mosquito), this protein is Protein G12.